The primary structure comprises 381 residues: Tetraacyldisaccharide 4'-kinase (381 aa).

78 to 85 (AVGGTGKT) is an ATP binding site.

The protein belongs to the LpxK family.

It catalyses the reaction a lipid A disaccharide + ATP = a lipid IVA + ADP + H(+). The protein operates within glycolipid biosynthesis; lipid IV(A) biosynthesis; lipid IV(A) from (3R)-3-hydroxytetradecanoyl-[acyl-carrier-protein] and UDP-N-acetyl-alpha-D-glucosamine: step 6/6. In terms of biological role, transfers the gamma-phosphate of ATP to the 4'-position of a tetraacyldisaccharide 1-phosphate intermediate (termed DS-1-P) to form tetraacyldisaccharide 1,4'-bis-phosphate (lipid IVA). This is Tetraacyldisaccharide 4'-kinase from Syntrophobacter fumaroxidans (strain DSM 10017 / MPOB).